Reading from the N-terminus, the 27-residue chain is Phospholipase A2 taicatoxin (27 aa).

This sequence belongs to the phospholipase A2 family. Group I subfamily. In terms of assembly, heterotrimer composed of an alpha-neurotoxin-like peptide of 8 kDa (AC P0CJ35), this neurotoxic phospholipase of 16 kDa and a serine protease inhibitor of 7 kDa (AC B7S4N9) at an approximate stoichiometry of 1:1:4; non-covalently linked. Ca(2+) is required as a cofactor. In terms of processing, contains 7 disulfide bonds. In terms of tissue distribution, expressed by the venom gland.

The protein localises to the secreted. The catalysed reaction is a 1,2-diacyl-sn-glycero-3-phosphocholine + H2O = a 1-acyl-sn-glycero-3-phosphocholine + a fatty acid + H(+). Its function is as follows. Heterotrimer: blocks the voltage-dependent L-type calcium channels from the heart, and the small conductance calcium-activated potassium channels in the chromaffin cells and in the brain. Is very toxic to mice. Monomer: Snake venom phospholipase A2 (PLA2) that has neurotoxic activities. Voltage-dependently affects ionic currents in chick (Gallus domesticus) dorsal root ganglion cells. PLA2 catalyzes the calcium-dependent hydrolysis of the 2-acyl groups in 3-sn-phosphoglycerides. This chain is Phospholipase A2 taicatoxin, found in Oxyuranus scutellatus scutellatus (Australian taipan).